The sequence spans 1023 residues: Presequence protease, mitochondrial (1023 aa).

The transit peptide at 1–62 directs the protein to the mitochondrion; sequence MFRQSKTIIT…PDLFLTAVKL (62 aa). Histidine 99 is a binding site for Zn(2+). The active-site Proton acceptor is glutamate 102. Histidine 103 and glutamate 200 together coordinate Zn(2+). Cysteine 114 and cysteine 551 form a disulfide bridge.

This sequence belongs to the peptidase M16 family. PreP subfamily. As to quaternary structure, monomer and homodimer; homodimerization is induced by binding of the substrate. Zn(2+) is required as a cofactor. In terms of processing, a disulfide bond locks the enzyme in the closed conformation preventing substrate entry into the catalytic chamber.

The protein resides in the mitochondrion matrix. Its activity is regulated as follows. Mainly exists in a closed and catalytically competent conformation but a closed-to-open switch allows substrate entry into the catalytic chamber. Substrate binding induces closure and dimerization. A disulfide bond may lock the enzyme in a closed conformation preventing substrate entry into the catalytic chamber, participating in redox regulation of the enzyme. Inhibited by metal-chelating agents. Inhibited by nickel and zinc excess, and slightly activated by manganese. Metalloendopeptidase of the mitochondrial matrix that functions in peptide cleavage and degradation rather than in protein processing. Has an ATP-independent activity. Specifically cleaves peptides in the range of 5 to 65 residues. Shows a preference for cleavage after small polar residues and before basic residues, but without any positional preference. Degrades the transit peptides of mitochondrial proteins after their cleavage. Also degrades other unstructured peptides. The polypeptide is Presequence protease, mitochondrial (pitrm1) (Danio rerio (Zebrafish)).